The following is a 208-amino-acid chain: Small ribosomal subunit protein uS4 (208 aa).

In terms of domain architecture, S4 RNA-binding spans 98–164 (TRLDNVVYRL…PKVKSIREIA (67 aa)).

The protein belongs to the universal ribosomal protein uS4 family. Part of the 30S ribosomal subunit. Contacts protein S5. The interaction surface between S4 and S5 is involved in control of translational fidelity.

One of the primary rRNA binding proteins, it binds directly to 16S rRNA where it nucleates assembly of the body of the 30S subunit. Functionally, with S5 and S12 plays an important role in translational accuracy. The polypeptide is Small ribosomal subunit protein uS4 (Ruminiclostridium cellulolyticum (strain ATCC 35319 / DSM 5812 / JCM 6584 / H10) (Clostridium cellulolyticum)).